The primary structure comprises 129 residues: NADH-quinone oxidoreductase subunit A (129 aa).

The next 3 helical transmembrane spans lie at 14–34, 67–87, and 95–115; these read LAIH…VAAL, FLIA…FAWA, and WFGL…LVYL.

Belongs to the complex I subunit 3 family. As to quaternary structure, NDH-1 is composed of 14 different subunits. Subunits NuoA, H, J, K, L, M, N constitute the membrane sector of the complex.

It localises to the cell inner membrane. It catalyses the reaction a quinone + NADH + 5 H(+)(in) = a quinol + NAD(+) + 4 H(+)(out). Its function is as follows. NDH-1 shuttles electrons from NADH, via FMN and iron-sulfur (Fe-S) centers, to quinones in the respiratory chain. The immediate electron acceptor for the enzyme in this species is believed to be ubiquinone. Couples the redox reaction to proton translocation (for every two electrons transferred, four hydrogen ions are translocated across the cytoplasmic membrane), and thus conserves the redox energy in a proton gradient. The sequence is that of NADH-quinone oxidoreductase subunit A from Rhodopseudomonas palustris (strain HaA2).